The sequence spans 314 residues: Homeobox-leucine zipper protein HAT7 (314 aa).

Residues 77-109 (HHHLTQKSPTTTNNMNDQDQVGEEDNLSDDGSH) form a disordered region. The span at 82–95 (QKSPTTTNNMNDQD) shows a compositional bias: polar residues. A DNA-binding region (homeobox) is located at residues 112–171 (LGEKKKRLNLEQVRALEKSFELGNKLEPERKMQLAKALGLQPRQIAIWFQNRRARWKTKQ). The segment at 172-207 (LERDYDSLKKQFDVLKSDNDSLLAHNKKLHAELVAL) is leucine-zipper.

This sequence belongs to the HD-ZIP homeobox family. Class I subfamily. Expressed predominantly in flowers, and in the cortex of the root and the stem.

It localises to the nucleus. Its function is as follows. Probable transcription factor. The protein is Homeobox-leucine zipper protein HAT7 (HAT7) of Arabidopsis thaliana (Mouse-ear cress).